We begin with the raw amino-acid sequence, 282 residues long: Transcription factor LBX1 (282 aa).

Residues 1-20 (MTSKEDGKAAPGEERRRSPL) show a composition bias toward basic and acidic residues. A disordered region spans residues 1 to 36 (MTSKEDGKAAPGEERRRSPLDHLPPPANSNKPLTPF). Positions 125 to 184 (RRKSRTAFTNHQIYELEKRFLYQKYLSPADRDQIAQQLGLTNAQVITWFQNRRAKLKRDL) form a DNA-binding region, homeobox. The disordered stretch occupies residues 210–282 (ELEQNSEASG…EEDEEIDVDD (73 aa)). Residues 218 to 227 (SGGGGGGGCG) show a composition bias toward gly residues. Residues 269–282 (CSEDEEDEEIDVDD) show a composition bias toward acidic residues.

In terms of assembly, interacts with SKOR1 which acts as a transcriptional corepressor. In terms of tissue distribution, expressed in the dorsal part of the spinal cord and hindbrain and in presumptive myogenic cells in lateral regions of differentiating somites.

It localises to the nucleus. In terms of biological role, transcription factor required for the development of GABAergic interneurons in the dorsal horn of the spinal cord and migration and further development of hypaxial muscle precursor cells for limb muscles, diaphragm and hypoglossal cord. The protein is Transcription factor LBX1 (Lbx1) of Mus musculus (Mouse).